Here is a 230-residue protein sequence, read N- to C-terminus: Cytochrome b6-f complex iron-sulfur subunit, chloroplastic (230 aa).

Residues 1 to 51 constitute a chloroplast transit peptide; the sequence is MASFTLSSATPSQLCSSKNGMFAPSLALAKAGRVNVLISKERIRGMKLTCQ. Residues 73–93 traverse the membrane as a helical segment; sequence LLGALSLPTGYMLLPYASFFV. One can recognise a Rieske domain in the interval 116-212; it reads AAEWLKTHAP…CDVDDGKVVF (97 aa). Residues C158, H160, C176, and H179 each coordinate [2Fe-2S] cluster. C163 and C178 form a disulfide bridge.

The protein belongs to the Rieske iron-sulfur protein family. In terms of assembly, the 4 large subunits of the cytochrome b6-f complex are cytochrome b6, subunit IV (17 kDa polypeptide, petD), cytochrome f and the Rieske protein, while the 4 small subunits are petG, petL, petM and petN. The complex functions as a dimer. [2Fe-2S] cluster is required as a cofactor.

It is found in the plastid. The protein localises to the chloroplast thylakoid membrane. It carries out the reaction 2 oxidized [plastocyanin] + a plastoquinol + 2 H(+)(in) = 2 reduced [plastocyanin] + a plastoquinone + 4 H(+)(out). Its function is as follows. Component of the cytochrome b6-f complex, which mediates electron transfer between photosystem II (PSII) and photosystem I (PSI), cyclic electron flow around PSI, and state transitions. The protein is Cytochrome b6-f complex iron-sulfur subunit, chloroplastic (petC) of Spinacia oleracea (Spinach).